We begin with the raw amino-acid sequence, 561 residues long: Cytochrome P450 monooxygenase iboC (561 aa).

The helical transmembrane segment at 8 to 28 (RFYYQLLAAVLIPALFVAWAA) threads the bilayer. Heme is bound at residue cysteine 484.

Belongs to the cytochrome P450 family. The cofactor is heme.

It localises to the membrane. Its pathway is secondary metabolite biosynthesis. Its function is as follows. Cytochrome P450 monooxygenase; part of the gene cluster that mediates the biosynthesis of the psychoactive metabolites ibotenic acid and muscimol. The first committed step is glutamate hydroxylation by the 2-oxoglutarate-dependent dioxygenase iboH, and the last step is decarboxylation of ibotenic acid to muscimol by the decarboxylase iboD. The order of the intermediate reactions is somewhat ambiguous. IboA likely activates the carboxylic acid at position 5 to introduce an amide bond, and the flavin monooxygenase iboF generates the N-O bond. There are several options for the latter step. One option is that iboF directly hydroxylates the amide nitrogen formed by iboA to produce a hydroxamic acid species. Another option is that iboF hydroxylates an external N-containing compound, whose resulting N-O bond is subsequently introduced into the hydroxyglutamate scaffold. The paralogous PLP-dependent cystathionine gamma-synthase-like enzymes iboG1 and iboG2 are likely involved in substitution of the OH group at position 3 by the O-N moiety. The first cyclic intermediate is most probably tricholomic acid which is likely desaturated to ibotenic acid by the cytochrome P450 monooxygenase iboC. This Amanita muscaria (strain Koide BX008) protein is Cytochrome P450 monooxygenase iboC.